The following is a 529-amino-acid chain: Lysine--tRNA ligase (529 aa).

The 'HIGH' region motif lies at 29–37 (ISGSVHIGN). The short motif at 274 to 278 (AMSKS) is the 'KMSKS' region element. Lys-277 contributes to the ATP binding site.

The protein belongs to the class-I aminoacyl-tRNA synthetase family.

It localises to the cytoplasm. The enzyme catalyses tRNA(Lys) + L-lysine + ATP = L-lysyl-tRNA(Lys) + AMP + diphosphate. The chain is Lysine--tRNA ligase from Methanosphaera stadtmanae (strain ATCC 43021 / DSM 3091 / JCM 11832 / MCB-3).